The chain runs to 96 residues: Large ribosomal subunit protein eL14 (96 aa).

It belongs to the eukaryotic ribosomal protein eL14 family.

This Desulfurococcus amylolyticus (strain DSM 18924 / JCM 16383 / VKM B-2413 / 1221n) (Desulfurococcus kamchatkensis) protein is Large ribosomal subunit protein eL14.